A 169-amino-acid polypeptide reads, in one-letter code: Large ribosomal subunit protein bL9 (169 aa).

Belongs to the bacterial ribosomal protein bL9 family.

Its function is as follows. Binds to the 23S rRNA. This is Large ribosomal subunit protein bL9 from Chlamydia pneumoniae (Chlamydophila pneumoniae).